Consider the following 1077-residue polypeptide: Ubiquitin-activating enzyme E1 2 (1077 aa).

The segment at 16–36 (SPMKKRRIDHTESADGSAINA) is disordered. Residues A499, D525, R536, K549, and 597-598 (DN) contribute to the ATP site. C653 serves as the catalytic Glycyl thioester intermediate.

It belongs to the ubiquitin-activating E1 family. As to quaternary structure, monomer. In terms of tissue distribution, expressed in leaves, flowers, roots and stems. Detected in germinating seeds, cotyledons, hypocotyls, vascular tissues, anthers, filaments, pollen, style, stigma, sepals, petals, ovary, developing ovules, funiculi and silique walls.

It carries out the reaction ATP + ubiquitin + [E1 ubiquitin-activating enzyme]-L-cysteine = AMP + diphosphate + S-ubiquitinyl-[E1 ubiquitin-activating enzyme]-L-cysteine.. It participates in protein modification; protein ubiquitination. In terms of biological role, activates ubiquitin by first adenylating its C-terminal glycine residue with ATP, and thereafter linking this residue to the side chain of a cysteine residue in E1, yielding a ubiquitin-E1 thioester and free AMP. The protein is Ubiquitin-activating enzyme E1 2 (UBA2) of Arabidopsis thaliana (Mouse-ear cress).